Here is a 167-residue protein sequence, read N- to C-terminus: DNA-directed RNA polymerase 19 kDa subunit (167 aa).

Residues D15–T41 are disordered. Positions D22–D36 are enriched in acidic residues.

It belongs to the poxviridae DNA-directed RNA polymerase 19 kDa subunit family. The DNA-dependent RNA polymerase used for intermediate and late genes expression consists of eight subunits (147) kDa, 133 kDa, 35 kDa, 30 kDa, 22 kDa, 19 kDa, 18 kDa and 7 kDa totalling more than 500 kDa in mass. The same holoenzyme, with the addition of the transcription-specificity factor RAP94, is used for early gene expression.

The protein localises to the virion. It catalyses the reaction RNA(n) + a ribonucleoside 5'-triphosphate = RNA(n+1) + diphosphate. Functionally, part of the DNA-dependent RNA polymerase which catalyzes the transcription of viral DNA into RNA using the four ribonucleoside triphosphates as substrates. Responsible for the transcription of early, intermediate and late genes. DNA-dependent RNA polymerase associates with the early transcription factor (ETF) thereby allowing the early genes transcription. Late transcription, and probably also intermediate transcription, require newly synthesized RNA polymerase. The polypeptide is DNA-directed RNA polymerase 19 kDa subunit (RPO19) (Vertebrata (FPV)).